The sequence spans 503 residues: Transcription termination/antitermination protein NusA (503 aa).

An S1 motif domain is found at 139-203; that stretch reads GDIINGIVKR…KGPQIFLSRV (65 aa). A KH domain is found at 308–378; that stretch reads SHKVEVVVSQ…LDVEEVIGQL (71 aa).

The protein belongs to the NusA family. In terms of assembly, monomer. Binds directly to the core enzyme of the DNA-dependent RNA polymerase and to nascent RNA.

It localises to the cytoplasm. Its function is as follows. Participates in both transcription termination and antitermination. This is Transcription termination/antitermination protein NusA from Rickettsia prowazekii (strain Madrid E).